The chain runs to 137 residues: Type III secretion protein HrcQb (137 aa).

Residues 1-22 (MSTEDLYQDDVESLEDYDDETA) show a composition bias toward acidic residues. Residues 1–67 (MSTEDLYQDD…EQQAPSGLDS (67 aa)) are disordered. Residues 23 to 33 (EQEHEHEHEQQ) show a composition bias toward basic and acidic residues. A compositionally biased stretch (acidic residues) spans 36–58 (EPDDESEYAEAEPDDDEQEEQEE).

It belongs to the FliN/MopA/SpaO family. As to quaternary structure, homotetramer. The four monomers assemble into two tightly bound homodimers. Interacts with HrcQa.

Its subcellular location is the cytoplasm. In terms of biological role, component of the type III secretion system, which is required for effector protein delivery, parasitism, and pathogenicity. Probably participates in the formation of a C-ring-like assembly along with HrcQa. This is Type III secretion protein HrcQb (hrcQb) from Pseudomonas syringae pv. tomato (strain ATCC BAA-871 / DC3000).